Here is a 180-residue protein sequence, read N- to C-terminus: Aspartate 1-decarboxylase (180 aa).

The active-site Schiff-base intermediate with substrate; via pyruvic acid is Ser-24. Ser-24 carries the pyruvic acid (Ser) modification. Thr-56 contacts substrate. The active-site Proton donor is Tyr-57. 72-74 is a substrate binding site; the sequence is GAA.

This sequence belongs to the PanD family. As to quaternary structure, heterooctamer of four alpha and four beta subunits. Pyruvate is required as a cofactor. Post-translationally, is synthesized initially as an inactive proenzyme, which is activated by self-cleavage at a specific serine bond to produce a beta-subunit with a hydroxyl group at its C-terminus and an alpha-subunit with a pyruvoyl group at its N-terminus.

It is found in the cytoplasm. It catalyses the reaction L-aspartate + H(+) = beta-alanine + CO2. It participates in cofactor biosynthesis; (R)-pantothenate biosynthesis; beta-alanine from L-aspartate: step 1/1. Its function is as follows. Catalyzes the pyruvoyl-dependent decarboxylation of aspartate to produce beta-alanine. The sequence is that of Aspartate 1-decarboxylase from Paramagnetospirillum magneticum (strain ATCC 700264 / AMB-1) (Magnetospirillum magneticum).